The chain runs to 347 residues: Acetylglutamate kinase, chloroplastic (347 aa).

The transit peptide at 1 to 50 (MATVTSNASPKSFSFTVSNPFKTLIPNKSPSLCYPTRNKNHHRLGFSIKA) directs the protein to the chloroplast. Residue Thr-51 is modified to N-acetylthreonine. Residue 94–95 (GA) participates in ATP binding. Residues Gly-126, Arg-148, and 242–245 (NINA) contribute to the N-acetyl-L-glutamate site. Position 260 (Lys-260) interacts with L-arginine. ATP contacts are provided by residues 265–266 (TD) and Leu-271. Residue Lys-282 participates in L-arginine binding. 297-305 (KVAGGMIPK) provides a ligand contact to ATP. Residues 334–337 (EIMS) and Gly-342 contribute to the L-arginine site.

The protein belongs to the acetylglutamate kinase family. ArgB subfamily. As to quaternary structure, interacts with GLB1. Interaction is dependent of MgATP and inhibited by 2-oxoglutarate, arginine, glutamate, citrate, and oxaloacetate.

It localises to the plastid. The protein localises to the chloroplast stroma. The catalysed reaction is N-acetyl-L-glutamate + ATP = N-acetyl-L-glutamyl 5-phosphate + ADP. It functions in the pathway amino-acid biosynthesis; L-arginine biosynthesis; N(2)-acetyl-L-ornithine from L-glutamate: step 2/4. Inhibited by arginine. Inhibition is relieved by binding to GLB1. Involved in the arginine biosynthetic pathway via the intermediate compound ornithine. The protein is Acetylglutamate kinase, chloroplastic of Arabidopsis thaliana (Mouse-ear cress).